The chain runs to 333 residues: 4-hydroxy-2-oxovalerate aldolase (333 aa).

A Pyruvate carboxyltransferase domain is found at 4 to 254; it reads VKIFDLTLRD…DCGIDLYKTM (251 aa). A substrate-binding site is contributed by 12-13; that stretch reads RD. Aspartate 13 is a Mn(2+) binding site. Histidine 16 serves as the catalytic Proton acceptor. Residue histidine 193 participates in substrate binding. Mn(2+) contacts are provided by histidine 193 and histidine 195. Substrate is bound at residue tyrosine 284.

The protein belongs to the 4-hydroxy-2-oxovalerate aldolase family.

It carries out the reaction (S)-4-hydroxy-2-oxopentanoate = acetaldehyde + pyruvate. The chain is 4-hydroxy-2-oxovalerate aldolase from Desulfitobacterium hafniense (strain DSM 10664 / DCB-2).